The primary structure comprises 332 residues: Ketol-acid reductoisomerase (NADP(+)) 1 (332 aa).

Residues 2 to 182 (AELFYDADAD…GGTRAGVIKT (181 aa)) form the KARI N-terminal Rossmann domain. NADP(+) contacts are provided by residues 25–28 (YGSQ), Ser51, Ser53, and 83–86 (DPIQ). The active site involves His108. NADP(+) is bound at residue Gly134. A KARI C-terminal knotted domain is found at 183 to 328 (TFTEETETDL…KELRKLMSWV (146 aa)). 4 residues coordinate Mg(2+): Asp191, Glu195, Glu227, and Glu231. Ser252 contributes to the substrate binding site.

Belongs to the ketol-acid reductoisomerase family. It depends on Mg(2+) as a cofactor.

The catalysed reaction is (2R)-2,3-dihydroxy-3-methylbutanoate + NADP(+) = (2S)-2-acetolactate + NADPH + H(+). The enzyme catalyses (2R,3R)-2,3-dihydroxy-3-methylpentanoate + NADP(+) = (S)-2-ethyl-2-hydroxy-3-oxobutanoate + NADPH + H(+). Its pathway is amino-acid biosynthesis; L-isoleucine biosynthesis; L-isoleucine from 2-oxobutanoate: step 2/4. It participates in amino-acid biosynthesis; L-valine biosynthesis; L-valine from pyruvate: step 2/4. Involved in the biosynthesis of branched-chain amino acids (BCAA). Catalyzes an alkyl-migration followed by a ketol-acid reduction of (S)-2-acetolactate (S2AL) to yield (R)-2,3-dihydroxy-isovalerate. In the isomerase reaction, S2AL is rearranged via a Mg-dependent methyl migration to produce 3-hydroxy-3-methyl-2-ketobutyrate (HMKB). In the reductase reaction, this 2-ketoacid undergoes a metal-dependent reduction by NADPH to yield (R)-2,3-dihydroxy-isovalerate. The chain is Ketol-acid reductoisomerase (NADP(+)) 1 from Streptomyces coelicolor (strain ATCC BAA-471 / A3(2) / M145).